A 237-amino-acid polypeptide reads, in one-letter code: MNIKDVGVIISKKPLKENTFIITVCTKNHGLYSGVVKESSKKSKFIYQEGNIVDFLWQARLHEHIGIAKCELIKSYTGYLIINKTKLYAFNSIISLIKELCHEREKHSNFFSFLLNYLDNLSKNFCFRDYINFELTLLAKTGYKLDLTKCGVTHVTTDLTYVSPKSARALSYEVGKPYKDKLLILPKFLLSDDSEITLEEKRQALTLTNYFFNRYLFHNNRQPEARQTFVGYILNEG.

Belongs to the RecO family.

Involved in DNA repair and RecF pathway recombination. The protein is DNA repair protein RecO of Rickettsia akari (strain Hartford).